A 404-amino-acid polypeptide reads, in one-letter code: Queuine tRNA-ribosyltransferase catalytic subunit (404 aa).

The Proton acceptor role is filled by Asp98. Substrate-binding positions include 98-102 (DSGGF), Asp152, Gln195, and Gly222. The segment at 253–259 (GVGYAED) is RNA binding. Asp272 acts as the Nucleophile in catalysis. The RNA binding; important for wobble base 34 recognition stretch occupies residues 277–281 (TRTAR). Cys310, Cys312, Cys315, and His347 together coordinate Zn(2+).

The protein belongs to the queuine tRNA-ribosyltransferase family. In terms of assembly, heterodimer of a catalytic subunit and an accessory subunit. It depends on Zn(2+) as a cofactor.

The protein resides in the cytoplasm. It localises to the nucleus. The enzyme catalyses guanosine(34) in tRNA + queuine = queuosine(34) in tRNA + guanine. Catalytic subunit of the queuine tRNA-ribosyltransferase (TGT) that catalyzes the base-exchange of a guanine (G) residue with queuine (Q) at position 34 (anticodon wobble position) in tRNAs with GU(N) anticodons (tRNA-Asp, -Asn, -His and -Tyr), resulting in the hypermodified nucleoside queuosine (7-(((4,5-cis-dihydroxy-2-cyclopenten-1-yl)amino)methyl)-7-deazaguanosine). Catalysis occurs through a double-displacement mechanism. The nucleophile active site attacks the C1' of nucleotide 34 to detach the guanine base from the RNA, forming a covalent enzyme-RNA intermediate. The proton acceptor active site deprotonates the incoming queuine, allowing a nucleophilic attack on the C1' of the ribose to form the product. The chain is Queuine tRNA-ribosyltransferase catalytic subunit from Schizosaccharomyces pombe (strain 972 / ATCC 24843) (Fission yeast).